Here is a 475-residue protein sequence, read N- to C-terminus: Pup--protein ligase (475 aa).

Residue glutamate 19 participates in Mg(2+) binding. Arginine 64 is an ATP binding site. Mg(2+) is bound at residue tyrosine 66. Aspartate 68 functions as the Proton acceptor in the catalytic mechanism. A Mg(2+)-binding site is contributed by glutamate 74. Positions 77 and 436 each coordinate ATP.

It belongs to the Pup ligase/Pup deamidase family. Pup-conjugating enzyme subfamily.

The enzyme catalyses ATP + [prokaryotic ubiquitin-like protein]-L-glutamate + [protein]-L-lysine = ADP + phosphate + N(6)-([prokaryotic ubiquitin-like protein]-gamma-L-glutamyl)-[protein]-L-lysine.. The protein operates within protein degradation; proteasomal Pup-dependent pathway. It functions in the pathway protein modification; protein pupylation. Its function is as follows. Catalyzes the covalent attachment of the prokaryotic ubiquitin-like protein modifier Pup to the proteasomal substrate proteins, thereby targeting them for proteasomal degradation. This tagging system is termed pupylation. The ligation reaction involves the side-chain carboxylate of the C-terminal glutamate of Pup and the side-chain amino group of a substrate lysine. This is Pup--protein ligase from Corynebacterium aurimucosum (strain ATCC 700975 / DSM 44827 / CIP 107346 / CN-1) (Corynebacterium nigricans).